The following is a 325-amino-acid chain: GMP reductase (325 aa).

Cysteine 174 acts as the Thioimidate intermediate in catalysis. NADP(+) is bound at residue 203–226 (IIADGGIRTNGDIAKSIRFGANMV).

It belongs to the IMPDH/GMPR family. GuaC type 2 subfamily.

It catalyses the reaction IMP + NH4(+) + NADP(+) = GMP + NADPH + 2 H(+). In terms of biological role, catalyzes the irreversible NADPH-dependent deamination of GMP to IMP. It functions in the conversion of nucleobase, nucleoside and nucleotide derivatives of G to A nucleotides, and in maintaining the intracellular balance of A and G nucleotides. This is GMP reductase from Latilactobacillus sakei subsp. sakei (strain 23K) (Lactobacillus sakei subsp. sakei).